The following is a 730-amino-acid chain: Rap1 GTPase-activating protein 2 (730 aa).

Residue serine 7 is modified to Phosphoserine; by PKG/PRKG1; in vitro. The tract at residues 32-53 is disordered; sequence ANSSDATLPDRPLSPPLTAPPT. At serine 45 the chain carries Phosphoserine. At threonine 49 the chain carries Phosphothreonine. The region spanning 248–464 is the Rap-GAP domain; the sequence is IVSYDEHEVN…RTRAALLDNL (217 aa). Position 507 is a phosphoserine (serine 507). The interval 509-533 is disordered; it reads ETMVGGQKKSHSGGIPGSLSGGISH. Serine 544, serine 558, serine 564, serine 612, and serine 613 each carry phosphoserine. The segment at 552–730 is disordered; it reads VKNQSRSPIK…LSHASSGAGH (179 aa). The segment covering 585 to 613 has biased composition (polar residues); the sequence is DSTSSTPKTPDGGHSSQEIKSETSSNPSS. Basic and acidic residues predominate over residues 618-631; the sequence is PNKEKPFMKLKENG. Residues 635–647 are compositionally biased toward low complexity; that stretch reads SRSSSSTSSVSST. Residues 661–670 are compositionally biased toward polar residues; it reads GSQPSTTSPF. Low complexity predominate over residues 678-687; sequence SPSPSSESPS. Residues 699–712 are compositionally biased toward polar residues; that stretch reads RSPTDAKSRNSPRS.

In terms of processing, in vitro phosphorylated by cGMP-dependent protein kinase 1 (cGKI) at Ser-7; the phosphorylation probably does not regulate GAP activity. Isoform 1 and isoform 2 are expressed in platelets with isoform 2 being the predominant form. Expressed in lymphocytes, heart, testis and pancreas.

The protein resides in the cytoplasm. It is found in the perinuclear region. GTPase activator for the nuclear Ras-related regulatory protein RAP-1A (KREV-1), converting it to the putatively inactive GDP-bound state. This is Rap1 GTPase-activating protein 2 (RAP1GAP2) from Homo sapiens (Human).